The chain runs to 372 residues: 4-hydroxy-3-methylbut-2-en-1-yl diphosphate synthase (flavodoxin) (372 aa).

[4Fe-4S] cluster is bound by residues Cys-270, Cys-273, Cys-305, and Glu-312.

It belongs to the IspG family. [4Fe-4S] cluster serves as cofactor.

The enzyme catalyses (2E)-4-hydroxy-3-methylbut-2-enyl diphosphate + oxidized [flavodoxin] + H2O + 2 H(+) = 2-C-methyl-D-erythritol 2,4-cyclic diphosphate + reduced [flavodoxin]. It participates in isoprenoid biosynthesis; isopentenyl diphosphate biosynthesis via DXP pathway; isopentenyl diphosphate from 1-deoxy-D-xylulose 5-phosphate: step 5/6. Converts 2C-methyl-D-erythritol 2,4-cyclodiphosphate (ME-2,4cPP) into 1-hydroxy-2-methyl-2-(E)-butenyl 4-diphosphate. The polypeptide is 4-hydroxy-3-methylbut-2-en-1-yl diphosphate synthase (flavodoxin) (Escherichia coli (strain SMS-3-5 / SECEC)).